Here is a 284-residue protein sequence, read N- to C-terminus: 4-diphosphocytidyl-2-C-methyl-D-erythritol kinase (284 aa).

The active site involves lysine 14. Residue 98–108 (PMGGGLGGGSS) participates in ATP binding. The active site involves aspartate 140.

It belongs to the GHMP kinase family. IspE subfamily.

The enzyme catalyses 4-CDP-2-C-methyl-D-erythritol + ATP = 4-CDP-2-C-methyl-D-erythritol 2-phosphate + ADP + H(+). The protein operates within isoprenoid biosynthesis; isopentenyl diphosphate biosynthesis via DXP pathway; isopentenyl diphosphate from 1-deoxy-D-xylulose 5-phosphate: step 3/6. Catalyzes the phosphorylation of the position 2 hydroxy group of 4-diphosphocytidyl-2C-methyl-D-erythritol. The protein is 4-diphosphocytidyl-2-C-methyl-D-erythritol kinase of Shewanella sp. (strain MR-4).